Consider the following 903-residue polypeptide: Probable leucine--tRNA ligase, mitochondrial (903 aa).

Lys-68 is subject to N6-acetyllysine. The 'HIGH' region motif lies at 92–102 (YPSGKLHMGHV). Lys-236 is modified (N6-acetyllysine). The 'KMSKS' region signature appears at 639–643 (KMSKS). ATP is bound at residue Lys-642. Phosphoserine is present on Ser-711.

It belongs to the class-I aminoacyl-tRNA synthetase family.

The protein localises to the mitochondrion matrix. It carries out the reaction tRNA(Leu) + L-leucine + ATP = L-leucyl-tRNA(Leu) + AMP + diphosphate. In Pongo abelii (Sumatran orangutan), this protein is Probable leucine--tRNA ligase, mitochondrial (LARS2).